We begin with the raw amino-acid sequence, 512 residues long: Proline--tRNA ligase (512 aa).

Residues 460–470 (SDEDDEQDTTD) show a composition bias toward acidic residues. A disordered region spans residues 460 to 484 (SDEDDEQDTTDENMGVNNDTTVESN).

Belongs to the class-II aminoacyl-tRNA synthetase family. ProS type 3 subfamily. In terms of assembly, homodimer.

It is found in the cytoplasm. The enzyme catalyses tRNA(Pro) + L-proline + ATP = L-prolyl-tRNA(Pro) + AMP + diphosphate. Catalyzes the attachment of proline to tRNA(Pro) in a two-step reaction: proline is first activated by ATP to form Pro-AMP and then transferred to the acceptor end of tRNA(Pro). The chain is Proline--tRNA ligase from Haloquadratum walsbyi (strain DSM 16790 / HBSQ001).